A 381-amino-acid polypeptide reads, in one-letter code: tRNA-cytidine(32) 2-sulfurtransferase (381 aa).

Positions 101-106 match the PP-loop motif motif; that stretch reads SGGKDS. 3 residues coordinate [4Fe-4S] cluster: C176, C179, and C267.

The protein belongs to the TtcA family. Homodimer. The cofactor is Mg(2+). It depends on [4Fe-4S] cluster as a cofactor.

The protein resides in the cytoplasm. It carries out the reaction cytidine(32) in tRNA + S-sulfanyl-L-cysteinyl-[cysteine desulfurase] + AH2 + ATP = 2-thiocytidine(32) in tRNA + L-cysteinyl-[cysteine desulfurase] + A + AMP + diphosphate + H(+). Its pathway is tRNA modification. Catalyzes the ATP-dependent 2-thiolation of cytidine in position 32 of tRNA, to form 2-thiocytidine (s(2)C32). The sulfur atoms are provided by the cysteine/cysteine desulfurase (IscS) system. The sequence is that of tRNA-cytidine(32) 2-sulfurtransferase from Psychrobacter arcticus (strain DSM 17307 / VKM B-2377 / 273-4).